Here is a 349-residue protein sequence, read N- to C-terminus: Heat-inducible transcription repressor HrcA (349 aa).

This sequence belongs to the HrcA family.

Functionally, negative regulator of class I heat shock genes (grpE-dnaK-dnaJ and groELS operons). Prevents heat-shock induction of these operons. The sequence is that of Heat-inducible transcription repressor HrcA from Xylella fastidiosa (strain M23).